Consider the following 461-residue polypeptide: UDP-N-acetylmuramate--L-alanine ligase (461 aa).

111 to 117 (GAHGKTT) is a binding site for ATP.

It belongs to the MurCDEF family.

The protein localises to the cytoplasm. The enzyme catalyses UDP-N-acetyl-alpha-D-muramate + L-alanine + ATP = UDP-N-acetyl-alpha-D-muramoyl-L-alanine + ADP + phosphate + H(+). Its pathway is cell wall biogenesis; peptidoglycan biosynthesis. Its function is as follows. Cell wall formation. This chain is UDP-N-acetylmuramate--L-alanine ligase, found in Pelotomaculum thermopropionicum (strain DSM 13744 / JCM 10971 / SI).